Here is a 552-residue protein sequence, read N- to C-terminus: MSEIALTVSLLSLVAVIGLWIGHIKVRGVSLGIGGVLFGGILVSHFMTQYGVKLDGHTLHFIQEFGLILFVYTIGIQVGPGFFASLRQSGLKLNAFAVMIVGISGILVILLHKIFDVPLPVILGIFSGAVTNTPSLGAGQQILTELGGESITAVMGMGYAIAYPFGIIGILLAMWLIRIIFKINVDKEADEFDSATNNKKDGLSTMNVRITNPNLNGLMLQEFPDFELHEVVYSRIKRNDELFVPKVHTQIQIGDILHLVGTKTALHKMQLILGEEVNVSLSTKGTMYRTERAVVTNEKVFGKQIRQLMLKGKYDVVISRLNRAGVELVPNGQMTLQFGDVLNLVGRQEDIEAVMAIIGNAQQKLQQVQMLPIFIGVGLGVLLGSIPIYLPGFPVALKLGLAGGPLVVALILARIGSIKKLYWFMPPSANLALREIGIVLFLAVVGWKAGGNFLNTLLSNDGLAWIGYGAIITFVPLIVTGLVARIYGKLNYLSLCGLLAGSMTDPPALAFANGIKEGNGAAALSYATVYPLVMFCRIILPQILAILLWVAG.

The next 5 membrane-spanning stretches (helical) occupy residues 4 to 24 (IALT…IGHI), 28 to 48 (GVSL…HFMT), 65 to 85 (FGLI…FFAS), 95 to 115 (AFAV…HKIF), and 157 to 177 (MGYA…MWLI). RCK C-terminal domains lie at 193–275 (DSAT…ILGE) and 277–360 (VNVS…IIGN). Transmembrane regions (helical) follow at residues 370 to 390 (MLPI…PIYL), 393 to 413 (FPVA…LILA), 438 to 458 (IVLF…NTLL), 463 to 483 (LAWI…TGLV), 492 to 512 (YLSL…LAFA), and 532 to 552 (LVMF…WVAG).

It belongs to the AAE transporter (TC 2.A.81) family. YidE subfamily.

It is found in the cell membrane. The protein is Putative transport protein HAPS_0158 of Glaesserella parasuis serovar 5 (strain SH0165) (Haemophilus parasuis).